We begin with the raw amino-acid sequence, 141 residues long: Large ribosomal subunit protein uL11 (141 aa).

Belongs to the universal ribosomal protein uL11 family. As to quaternary structure, part of the ribosomal stalk of the 50S ribosomal subunit. Interacts with L10 and the large rRNA to form the base of the stalk. L10 forms an elongated spine to which L12 dimers bind in a sequential fashion forming a multimeric L10(L12)X complex. One or more lysine residues are methylated.

Its function is as follows. Forms part of the ribosomal stalk which helps the ribosome interact with GTP-bound translation factors. The protein is Large ribosomal subunit protein uL11 of Desulfotalea psychrophila (strain LSv54 / DSM 12343).